We begin with the raw amino-acid sequence, 367 residues long: Sulfate/thiosulfate import ATP-binding protein CysA 2 (367 aa).

The region spanning 3 to 237 (VRVQNIRKEF…PVSPFVYGFI (235 aa)) is the ABC transporter domain. Residue 35-42 (GPSGSGKT) coordinates ATP.

The protein belongs to the ABC transporter superfamily. Sulfate/tungstate importer (TC 3.A.1.6) family. As to quaternary structure, the complex is composed of two ATP-binding proteins (CysA), two transmembrane proteins (CysT and CysW) and a solute-binding protein (CysP).

It localises to the cell inner membrane. The catalysed reaction is sulfate(out) + ATP + H2O = sulfate(in) + ADP + phosphate + H(+). It carries out the reaction thiosulfate(out) + ATP + H2O = thiosulfate(in) + ADP + phosphate + H(+). Functionally, part of the ABC transporter complex CysAWTP involved in sulfate/thiosulfate import. Responsible for energy coupling to the transport system. The sequence is that of Sulfate/thiosulfate import ATP-binding protein CysA 2 from Rhizobium meliloti (strain 1021) (Ensifer meliloti).